Here is a 1106-residue protein sequence, read N- to C-terminus: Communication mutant protein F (1106 aa).

Positions 1–28 (MKIYKKNHFLKILIIFIYLSCNILKVNA) are cleaved as a signal peptide. One can recognise a G8 domain in the interval 254–380 (TIWPNGVVPS…YHNTWSKLAS (127 aa)). N-linked (GlcNAc...) asparagine glycosylation is found at N267, N306, N512, N536, N677, N715, and N833.

The protein belongs to the comF family.

The protein localises to the secreted. This chain is Communication mutant protein F (comF-1), found in Dictyostelium discoideum (Social amoeba).